The primary structure comprises 207 residues: Reticulon-1-A (207 aa).

The Reticulon domain occupies A21–E207. 2 consecutive transmembrane segments (helical) span residues I35–V55 and V139–M159.

As to expression, expressed in the animal hemisphere (presumptive neural ectoderm) of blastula and gastrula stage embryos, and along the anterior neural border, in the panplacodal primordium, and in the dorsolateral side of archenteron roof of late neurula embryos. At the tailbud stage, expression localizes to the central nervous system, including the spinal cord, prosencephalon, mesencephalon and rhombencephalon, as well as the lateral line placode, otic vesicle and pronephros.

Its subcellular location is the endoplasmic reticulum membrane. It localises to the nucleus. Functionally, inhibits amyloid precursor protein processing, probably by blocking BACE1 activity. The polypeptide is Reticulon-1-A (rtn1-a) (Xenopus laevis (African clawed frog)).